Here is a 2009-residue protein sequence, read N- to C-terminus: Sodium channel protein type 1 subunit alpha (2009 aa).

Residues 1-128 (MEQTVLVPPG…KIAIKILVHS (128 aa)) lie on the Cytoplasmic side of the membrane. The segment covering 28–48 (RIAEEKAKNPKPDKKDDDENG) has biased composition (basic and acidic residues). The interval 28 to 60 (RIAEEKAKNPKPDKKDDDENGPKPNSDLEAGKN) is disordered. Residues 110–454 (ILTPFNPLRK…QQMIEQLKKQ (345 aa)) form an I repeat. Residues 129-146 (LFSMLIMCTILTNCVFMT) traverse the membrane as a helical segment. Topologically, residues 147–152 (MSNPPD) are extracellular. Residues 153 to 177 (WTKNVEYTFTGIYTFESLIKIIARG) traverse the membrane as a helical segment. The Cytoplasmic segment spans residues 178–188 (FCLEDFTFLRD). A helical transmembrane segment spans residues 189 to 205 (PWNWLDFTVITFAYVTE). Residues 206–213 (FVDLGNVS) lie on the Extracellular side of the membrane. An N-linked (GlcNAc...) asparagine glycan is attached at N211. The helical transmembrane segment at 214–235 (ALRTFRVLRALKTISVIPGLKT) threads the bilayer. Topologically, residues 236–245 (IVGALIQSVK) are cytoplasmic. A helical transmembrane segment spans residues 246-269 (KLSDVMILTVFCLSVFALIGLQLF). The Extracellular segment spans residues 270 to 369 (MGNLRNKCIQ…YGYTSFDTFS (100 aa)). Cystine bridges form between C277–C345 and C336–C351. N-linked (GlcNAc...) asparagine glycosylation is found at N284, N295, N301, N306, and N338. An intramembrane region (pore-forming) is located at residues 370–384 (WAFLSLFRLMTQDFW). Topologically, residues 385–397 (ENLYQLTLRAAGK) are extracellular. A helical membrane pass occupies residues 398 to 423 (TYMIFFVLVIFLGSFYLINLILAVVA). Residues 424-768 (MAYEEQNQAT…HVVNLVVMDP (345 aa)) lie on the Cytoplasmic side of the membrane. Residues 455-529 (QEAAQQAATA…FQKSESEDSI (75 aa)) are disordered. Positions 456–466 (EAAQQAATATA) are enriched in low complexity. S470 bears the Phosphoserine mark. A compositionally biased stretch (low complexity) spans 479-492 (LSDSSSEASKLSSK). The segment covering 495–506 (KERRNRRKKRKQ) has biased composition (basic residues). Positions 520-529 (FQKSESEDSI) are enriched in basic and acidic residues. Phosphoserine is present on residues S523, S525, S550, S551, S607, and S730. Residues 584 to 627 (VGSENDFADDEHSTFEDNESRRDSLFVPRRHGERRNSNLSQTSR) form a disordered region. The segment covering 593-607 (DEHSTFEDNESRRDS) has biased composition (basic and acidic residues). The stretch at 750 to 1022 (CSPYWLKVKH…QIAVDRMHKG (273 aa)) is one II repeat. The helical transmembrane segment at 769–787 (FVDLAITICIVLNTLFMAM) threads the bilayer. The Extracellular portion of the chain corresponds to 788–797 (EHYPMTDHFN). Residues 798–820 (NVLTVGNLVFTGIFTAEMFLKII) traverse the membrane as a helical segment. Residues 821-830 (AMDPYYYFQE) are Cytoplasmic-facing. Residues 831–849 (GWNIFDGFIVTLSLVELGL) form a helical membrane-spanning segment. Topologically, residues 850–854 (ANVEG) are extracellular. A helical transmembrane segment spans residues 855 to 874 (LSVLRSFRLLRVFKLAKSWP). The Cytoplasmic segment spans residues 875-891 (TLNMLIKIIGNSVGALG). A helical membrane pass occupies residues 892-912 (NLTLVLAIIVFIFAVVGMQLF). The Extracellular portion of the chain corresponds to 913–938 (GKSYKDCVCKIASDCQLPRWHMNDFF). A disulfide bridge links C921 with C927. Positions 939-952 (HSFLIVFRVLCGEW) form an intramembrane region, pore-forming. The Extracellular segment spans residues 953 to 965 (IETMWDCMEVAGQ). Residues C959 and C968 are joined by a disulfide bond. Residues 966 to 992 (AMCLTVFMMVMVIGNLVVLNLFLALLL) traverse the membrane as a helical segment. Topologically, residues 993–1218 (SSFSADNLAA…RTCFRIVEHN (226 aa)) are cytoplasmic. A disordered region spans residues 1129 to 1163 (TEDFSSESDLEESKEKLNESSSSSEGSTVDIGAPV). The III repeat unit spans residues 1200–1514 (RGKQWWNLRR…KKYYNAMKKL (315 aa)). Residues 1219-1237 (WFETFIVFMILLSSGALAF) traverse the membrane as a helical segment. Topologically, residues 1238–1250 (EDIYIDQRKTIKT) are extracellular. Residues 1251–1276 (MLEYADKVFTYIFILEMLLKWVAYGY) form a helical membrane-spanning segment. The Cytoplasmic portion of the chain corresponds to 1277–1278 (QT). The helical transmembrane segment at 1279-1304 (YFTNAWCWLDFLIVDVSLVSLTANAL) threads the bilayer. Residues 1305–1313 (GYSELGAIK) lie on the Extracellular side of the membrane. Residues 1314-1332 (SLRTLRALRPLRALSRFEG) form a helical membrane-spanning segment. The Cytoplasmic segment spans residues 1333–1345 (MRVVVNALLGAIP). Residues 1346–1369 (SIMNVLLVCLIFWLIFSIMGVNLF) form a helical membrane-spanning segment. The Extracellular segment spans residues 1370 to 1415 (AGKFYHCINTTTGDRFDIEDVNNHTDCLKLIERNETARWKNVKVNF). C1376 and C1396 are joined by a disulfide. N1378, N1392, and N1403 each carry an N-linked (GlcNAc...) asparagine glycan. The pore-forming intramembrane region spans 1416–1433 (DNVGFGYLSLLQVATFKG). The Extracellular segment spans residues 1434–1457 (WMDIMYAAVDSRNVELQPKYEESL). A helical membrane pass occupies residues 1458–1483 (YMYLYFVIFIIFGSFFTLNLFIGVII). At 1484 to 1541 (DNFNQQKKKFGGQDIFMTEEQKKYYNAMKKLGSKKPQKPIPRPGNKFQGMVFDFVTRQ) the chain is on the cytoplasmic side. S1516 carries the phosphoserine; by PKC modification. One copy of the IV repeat lies at 1523–1821 (IPRPGNKFQG…WEKFDPDATQ (299 aa)). Residues 1542–1560 (VFDISIMILICLNMVTMMV) traverse the membrane as a helical segment. Residues 1561 to 1571 (ETDDQSEYVTT) are Extracellular-facing. The tract at residues 1561–1571 (ETDDQSEYVTT) is S1-S2 loop of repeat IV. Residues 1572-1593 (ILSRINLVFIVLFTGECVLKLI) traverse the membrane as a helical segment. The Cytoplasmic segment spans residues 1594-1601 (SLRHYYFT). The helical transmembrane segment at 1602–1623 (IGWNIFDFVVVILSIVGMFLAE) threads the bilayer. The tract at residues 1619–1636 (MFLAELIEKYFVSPTLFR) is S3b-S4 loop of repeat IV. The Extracellular portion of the chain corresponds to 1624–1636 (LIEKYFVSPTLFR). Residues 1637–1655 (VIRLARIGRILRLIKGAKG) traverse the membrane as a helical segment. Topologically, residues 1656-1665 (IRTLLFALMM) are cytoplasmic. Residues 1666–1688 (SLPALFNIGLLLFLVMFIYAIFG) form a helical membrane-spanning segment. The Extracellular segment spans residues 1689-1711 (MSNFAYVKREVGIDDMFNFETFG). Residues 1712–1726 (NSMICLFQITTSAGW) constitute an intramembrane region (pore-forming). Over 1727 to 1759 (DGLLAPILNSKPPDCDPNKVNPGSSVKGDCGNP) the chain is Extracellular. A disulfide bridge links C1741 with C1756. Residues 1760 to 1788 (SVGIFFFVSYIIISFLVVVNMYIAVILEN) form a helical membrane-spanning segment. The Cytoplasmic segment spans residues 1789–2009 (FSVATEESAE…EGKDEKAKGK (221 aa)). The 30-residue stretch at 1915–1944 (EEVSAVIIQRAYRRHLLKRTVKQASFTYNK) folds into the IQ domain. Residues 1986 to 2009 (YDRVTKPIVEKHEQEGKDEKAKGK) form a disordered region. Positions 1988–2009 (RVTKPIVEKHEQEGKDEKAKGK) are enriched in basic and acidic residues.

Belongs to the sodium channel (TC 1.A.1.10) family. Nav1.1/SCN1A subfamily. In terms of assembly, the Nav1.1 voltage-gated sodium channel consists of an ion-conducting alpha subunit SCN1A which is functional on its own regulated by one or more beta-1 (SCN1B), beta-2 (SCN2B), beta-3 (SCN3B) and beta-4 (SCN4B) subunits. SCN1B and SCN3B are non-covalently associated with SCN1A. SCN2B and SCN4B are disulfide-linked to SCN1A. SCN1B regulates both the expression at the plasma membrane and the voltage dependence of Nav1.1 inactivation. SCN3B and SCN4B reduce Nav1.1 conductance. Probably interacts with TMEM233; modulates the gating properties of NaV1.1. Interacts with FGF13; regulates the steady-state inactivation of Nav.1.1. In terms of processing, phosphorylation at Ser-1516 by PKC in a highly conserved cytoplasmic loop slows inactivation of the sodium channel and reduces peak sodium currents.

The protein resides in the cell membrane. It carries out the reaction Na(+)(in) = Na(+)(out). Its activity is regulated as follows. Activated by the spider toxins Hm1a and Hm1b (H.maculata, AC P60992 and AC P0DOC5) eliciting acute pain and mechanical allodynia. Inhibited by the conotoxin GVIIJ. Inhibited by the spider beta/delta-theraphotoxin-Pre1a. Functionally, pore-forming subunit of Nav1.1, a voltage-gated sodium (Nav) channel that directly mediates the depolarizing phase of action potentials in excitable membranes. Navs, also called VGSCs (voltage-gated sodium channels) or VDSCs (voltage-dependent sodium channels), operate by switching between closed and open conformations depending on the voltage difference across the membrane. In the open conformation they allow Na(+) ions to selectively pass through the pore, along their electrochemical gradient. The influx of Na(+) ions provokes membrane depolarization, initiating the propagation of electrical signals throughout cells and tissues. By regulating the excitability of neurons, ensures that they respond appropriately to synaptic inputs, maintaining the balance between excitation and inhibition in brain neural circuits. Nav1.1 plays a role in controlling the excitability and action potential propagation from somatosensory neurons, thereby contributing to the sensory perception of mechanically-induced pain. This chain is Sodium channel protein type 1 subunit alpha, found in Homo sapiens (Human).